A 263-amino-acid chain; its full sequence is Small ribosomal subunit protein eS4 (263 aa).

Positions 42–104 (LPLIVFLRNR…TGEHFRLVYD (63 aa)) constitute an S4 RNA-binding domain.

The protein belongs to the eukaryotic ribosomal protein eS4 family.

The sequence is that of Small ribosomal subunit protein eS4 (RPS4Y1) from Gorilla gorilla gorilla (Western lowland gorilla).